Consider the following 1939-residue polypeptide: Myosin-6 (1939 aa).

The region spanning 32 to 81 (DIRTECFVPDDKEEFVKAKIVSREGGKVTAETENGKTVTVKEDQVMQQNP) is the Myosin N-terminal SH3-like domain. Positions 85-780 (DKIEDMAMLT…LLGLLEEMRD (696 aa)) constitute a Myosin motor domain. K129 bears the N6,N6,N6-trimethyllysine mark. ATP is bound at residue 178 to 185 (GESGAGKT). T379 is subject to Phosphothreonine. The residue at position 417 (S417) is a Phosphoserine. 2 actin-binding regions span residues 657–679 (LNKL…IPNE) and 759–773 (KFGH…GLLG). In terms of domain architecture, IQ spans 783 to 812 (LSRIITRIQAQARGQLMRIEFKKMVERRDA). The stretch at 842–1939 (LKSAETEKEM…GAKQKMHDEE (1098 aa)) forms a coiled coil. 2 positions are modified to phosphoserine: S1090 and S1139. Y1261 is subject to Phosphotyrosine. Residue S1271 is modified to Phosphoserine. Residues T1277 and T1284 each carry the phosphothreonine modification. A Phosphoserine modification is found at S1309. Y1310 carries the phosphotyrosine modification. T1311 carries the post-translational modification Phosphothreonine. S1512 carries the phosphoserine modification. A phosphothreonine mark is found at T1515 and T1681. Positions 1908 to 1939 (AEERADIAESQVNKLRAKSRDIGAKQKMHDEE) are disordered. Positions 1925 to 1939 (KSRDIGAKQKMHDEE) are enriched in basic and acidic residues.

Belongs to the TRAFAC class myosin-kinesin ATPase superfamily. Myosin family. As to quaternary structure, muscle myosin is a hexameric protein that consists of 2 heavy chain subunits (MHC), 2 alkali light chain subunits (MLC) and 2 regulatory light chain subunits (MLC-2).

It localises to the cytoplasm. The protein localises to the myofibril. Functionally, muscle contraction. This is Myosin-6 (MYH6) from Mesocricetus auratus (Golden hamster).